Consider the following 1159-residue polypeptide: Caspase recruitment domain-containing protein 11 (1159 aa).

Residues 18 to 110 enclose the CARD domain; the sequence is EEEALWDNVE…ELYKLVTGKE (93 aa). Positions 111–128 are linker; that stretch reads PTRRFSTIVVEEGHEGLT. Positions 176 to 449 form a coiled coil; that stretch reads FQERYYKMKE…KDNGSLDQSL (274 aa). A disordered region spans residues 441–496; the sequence is DNGSLDQSLPRHLPATIISQNLGDTSPRTNGQEADDSSTSEESPEDSKYFLPYHPP. 2 positions are modified to phosphoserine: serine 448 and serine 466. Positions 450 to 671 are inhibitory domain (ID); sequence PRHLPATIIS…GHVRGTGPLV (222 aa). Residues 457–472 show a composition bias toward polar residues; the sequence is IISQNLGDTSPRTNGQ. A compositionally biased stretch (acidic residues) spans 473 to 484; it reads EADDSSTSEESP. Phosphoserine is present on residues serine 512 and serine 540. Positions 532–578 are disordered; sequence HEEDFTDGSPSSSRSLPVTSSFSKMQPHRSRSSIMSITAEPPGNDSI. Residues 540-554 show a composition bias toward low complexity; the sequence is SPSSSRSLPVTSSFS. Residue serine 564 is modified to Phosphoserine; by PKC/PRKCB and PKC/PRKCQ. At serine 598 the chain carries Phosphoserine. The interval 610–631 is disordered; it reads NHERYSFGPPSIHSSSSSHQSE. Over residues 620–630 the composition is skewed to low complexity; sequence SIHSSSSSHQS. Phosphoserine; by PKC/PRKCB and PKC/PRKCQ occurs at positions 649 and 657. Residues 672–760 form the PDZ domain; it reads QHTTLNGDGL…LITLHYKVNH (89 aa). Phosphoserine occurs at positions 891 and 930. One can recognise a Guanylate kinase-like domain in the interval 978–1145; sequence RRRPVLFTPT…LLRVLKDKIV (168 aa).

As to quaternary structure, homodimer; disulfide-linked. Homomultimer; polymerizes following activation, forming a nucleating helical template that seeds BCL10-filament formation via a CARD-CARD interaction. Interacts (via CARD domain) with BCL10 (via CARD domain); interaction takes place following CARD11 activation and polymerization, leading to the formation of a filamentous CBM complex assembly. Component of a CBM complex (CARD11-BCL10-MALT1) complex involved in NF-kappa-B activation. Found in a membrane raft complex, at least composed of BCL10, CARD11, DPP4 and IKBKB. Interacts (via PDZ domain) with DPP4 (via cytoplasmic tail). Phosphorylation at Ser-564, Ser-649 and Ser-657 by PRKCB and PRKCQ leads to a shift from an inactive to an active form that activates the NF-kappa-B signaling.

It localises to the cytoplasm. The protein resides in the membrane raft. Its activity is regulated as follows. Maintained in an autoinhibited state via homodimerization in which the CARD domain forms an extensive interaction with the adjacent linker and coiled-coil regions. Activation downstream of T-cell receptor (TCR) by phosphorylation by PRKCB and PRKCQ triggers CARD11 homooligomerization and BCL10 recruitment, followed by activation of NF-kappa-B. Its function is as follows. Adapter protein that plays a key role in adaptive immune response by transducing the activation of NF-kappa-B downstream of T-cell receptor (TCR) and B-cell receptor (BCR) engagement. Transduces signals downstream TCR or BCR activation via the formation of a multiprotein complex together with BCL10 and MALT1 that induces NF-kappa-B and MAP kinase p38 (MAPK11, MAPK12, MAPK13 and/or MAPK14) pathways. Upon activation in response to TCR or BCR triggering, CARD11 homooligomerizes to form a nucleating helical template that recruits BCL10 via CARD-CARD interaction, thereby promoting polymerization of BCL10 and subsequent recruitment of MALT1: this leads to I-kappa-B kinase (IKK) phosphorylation and degradation, and release of NF-kappa-B proteins for nuclear translocation. Its binding to DPP4 induces T-cell proliferation and NF-kappa-B activation in a T-cell receptor/CD3-dependent manner. Promotes linear ubiquitination of BCL10 by promoting the targeting of BCL10 to RNF31/HOIP. Stimulates the phosphorylation of BCL10. Also activates the TORC1 signaling pathway. This is Caspase recruitment domain-containing protein 11 from Mus musculus (Mouse).